Consider the following 78-residue polypeptide: Large ribosomal subunit protein bL28 (78 aa).

Belongs to the bacterial ribosomal protein bL28 family.

This is Large ribosomal subunit protein bL28 from Acinetobacter baylyi (strain ATCC 33305 / BD413 / ADP1).